A 193-amino-acid chain; its full sequence is Ribosome maturation factor RimM (193 aa).

In terms of domain architecture, PRC barrel spans valine 112–phenylalanine 193.

It belongs to the RimM family. Binds ribosomal protein uS19.

The protein resides in the cytoplasm. In terms of biological role, an accessory protein needed during the final step in the assembly of 30S ribosomal subunit, possibly for assembly of the head region. Essential for efficient processing of 16S rRNA. May be needed both before and after RbfA during the maturation of 16S rRNA. It has affinity for free ribosomal 30S subunits but not for 70S ribosomes. The chain is Ribosome maturation factor RimM from Methylibium petroleiphilum (strain ATCC BAA-1232 / LMG 22953 / PM1).